The primary structure comprises 236 residues: MRVLGGEVSPFTARARLALDLRGVAYELLDEPLGPKKSDRLLAANPVYGKIPVLLLPDGRAICESAVIVQYIEDVARESGGAEAGSLLLPDDPYERAMHRFWTAFIDDKFWPALDAVSLAPTPGARAQAAEDTRAALSLLEEAFKDRSNGRAFFSGGDAAPGLLDLALGCFLPALRACERLHGLSLIDASATPLLDGWSQRFAAHPAAKRVLPDTEKVVQFTRFLQVQAQFRVHVS.

A GST N-terminal domain is found at 1-80; that stretch reads MRVLGGEVSP…YIEDVARESG (80 aa). Residues S9, K37, I51, and 64 to 65 contribute to the glutathione site; that span reads ES. The 130-residue stretch at 92–221 folds into the GST C-terminal domain; the sequence is DPYERAMHRF…LPDTEKVVQF (130 aa).

Belongs to the GST superfamily. HSP26 family.

The enzyme catalyses RX + glutathione = an S-substituted glutathione + a halide anion + H(+). Its pathway is pigment biosynthesis; anthocyanin biosynthesis. This chain is Probable glutathione S-transferase BZ2 (BZ2), found in Zea mays (Maize).